The primary structure comprises 635 residues: Threonine--tRNA ligase (635 aa).

The TGS domain maps to 1 to 61; the sequence is MIQITLPDAS…EKDSALSIIT (61 aa). The catalytic stretch occupies residues 242–533; sequence DHRKLGKELD…LIEEHAGALP (292 aa). Residues C333, H384, and H510 each contribute to the Zn(2+) site.

This sequence belongs to the class-II aminoacyl-tRNA synthetase family. Homodimer. The cofactor is Zn(2+).

The protein localises to the cytoplasm. It catalyses the reaction tRNA(Thr) + L-threonine + ATP = L-threonyl-tRNA(Thr) + AMP + diphosphate + H(+). In terms of biological role, catalyzes the attachment of threonine to tRNA(Thr) in a two-step reaction: L-threonine is first activated by ATP to form Thr-AMP and then transferred to the acceptor end of tRNA(Thr). Also edits incorrectly charged L-seryl-tRNA(Thr). This chain is Threonine--tRNA ligase, found in Polaromonas sp. (strain JS666 / ATCC BAA-500).